Here is a 258-residue protein sequence, read N- to C-terminus: Aquaporin PIP1-2 (258 aa).

Positions 1 to 37 are disordered; it reads MEGKEEDVRLGANKFTERQPIGTAAQSQDKDYKEPPP. The Cytoplasmic portion of the chain corresponds to 1-55; it reads MEGKEEDVRLGANKFTERQPIGTAAQSQDKDYKEPPPAPLFEPGELSSWSFYRAG. The helical transmembrane segment at 56–76 threads the bilayer; the sequence is IAEFVATFLFLYITILTVMGV. At 77–89 the chain is on the extracellular side; the sequence is VKSSTKCSTVGIQ. The helical transmembrane segment at 90 to 110 threads the bilayer; that stretch reads GIAWAFGGMIFALVYCTAGIS. Over 111 to 133 the chain is Cytoplasmic; that stretch reads GGHINPAVTFGLFLARKLSLTRA. The NPA 1 signature appears at 115–117; that stretch reads NPA. The chain crosses the membrane as a helical span at residues 134 to 154; sequence LFYMVMQCLGAICGAGVVKGF. Residues 155–175 lie on the Extracellular side of the membrane; that stretch reads QKGLYENNGGGANVVAPGYTK. A helical transmembrane segment spans residues 176 to 196; that stretch reads GDGLGAEIVGTFILVYTVFSA. Residues 197–209 lie on the Cytoplasmic side of the membrane; that stretch reads TDAKRSARDSHVP. A helical membrane pass occupies residues 210–230; sequence ILAPLPIGFAVFLVHLATIPI. Topologically, residues 231 to 258 are extracellular; that stretch reads TGTGINPARSLGAAIIYNKGHAWDDHWI. The NPA 2 motif lies at 236–238; the sequence is NPA.

Belongs to the MIP/aquaporin (TC 1.A.8) family. PIP (TC 1.A.8.11) subfamily. As to expression, barely detectable in roots, leaves and fruits.

Its subcellular location is the cell membrane. Its function is as follows. Water channel required to facilitate the transport of water across cell membrane; mercury-insensitive. Contributes to the tolerance to multiple abiotic stresses including salt (NaCl), cold and water deprivation, by modulating cytosolic K(+)/Na(+) ratio, maintaining osmotic balance, and reducing membrane injury (e.g. oxidative injury). The sequence is that of Aquaporin PIP1-2 from Musa acuminata (Banana).